Here is a 366-residue protein sequence, read N- to C-terminus: Protein sigma-NS (366 aa).

Positions 1–11 (MASSLRAAISK) are important for ssRNA-binding and formation of complexes.

The protein belongs to the orthoreovirus sigma-NS protein family. In terms of assembly, homooligomer; in presence of RNA. Interacts with protein mu-NS; this interaction allows the localization of sigma-NS to the viral factories. Interacts with host G3BP1 (via C-terminus); this interaction induces the relocalization of G3BP1 and other SG proteins to the viral factories periphery.

It is found in the host cytoplasm. Protein that binds to ssRNA and participates with protein mu-NS in forming the matrix of viral factories, which are large inclusions in the host cytoplasm where replication intermediates are assembled and viral RNA replication takes place. Plays a role in the inhibition of the integrated stress response (ISR) to escape from host cell translational shutoff. Participates in the disruption of stress granules (SG) through its association with host G3BP1 and mu-NS. The sequence is that of Protein sigma-NS (S3) from Mammalia (T1L).